A 422-amino-acid polypeptide reads, in one-letter code: Carboxypeptidase B2 (422 aa).

The N-terminal stretch at 1–21 is a signal peptide; that stretch reads MKLYGLGVLVAIILYEKHGLA. Positions 22-113 are cleaved as a propeptide — activation peptide; that stretch reads FQSGHVLSAL…QTSNDTVSPR (92 aa). Residues Asn43, Asn72, Asn84, and Asn107 are each glycosylated (N-linked (GlcNAc...) asparagine). The Peptidase M14 domain maps to 121–418; that stretch reads QYHSLNEIYS…AAVSKIAWHV (298 aa). A disulfide bridge links Cys177 with Cys190. Zn(2+) is bound by residues His180 and Glu183. Substrate contacts are provided by residues 180–183 and Arg238; that span reads HARE. An N-linked (GlcNAc...) asparagine glycan is attached at Asn240. 2 cysteine pairs are disulfide-bonded: Cys249/Cys273 and Cys264/Cys278. 255 to 256 contributes to the substrate binding site; it reads NR. His309 is a binding site for Zn(2+). 310–311 serves as a coordination point for substrate; that stretch reads SY. A glycan (N-linked (GlcNAc...) asparagine) is linked at Asn322. Tyr362 serves as a coordination point for substrate. Catalysis depends on Glu384, which acts as the Proton donor/acceptor.

Belongs to the peptidase M14 family. Zn(2+) is required as a cofactor. Plasma; synthesized in the liver.

The protein localises to the secreted. The enzyme catalyses Release of C-terminal Arg and Lys from a polypeptide.. TAFI/CPB2 is unique among carboxypeptidases in that it spontaneously inactivates with a short half-life, a property that is crucial for its role in controlling blood clot lysis. The zymogen is stabilized by interactions with the activation peptide. Release of the activation peptide increases a dynamic flap mobility and in time this leads to conformational changes that disrupt the catalytic site and expose a cryptic thrombin-cleavage site present at Arg-323. Cleaves C-terminal arginine or lysine residues from biologically active peptides such as kinins or anaphylatoxins in the circulation thereby regulating their activities. Down-regulates fibrinolysis by removing C-terminal lysine residues from fibrin that has already been partially degraded by plasmin. This Rattus norvegicus (Rat) protein is Carboxypeptidase B2 (Cpb2).